The sequence spans 225 residues: 2-C-methyl-D-erythritol 4-phosphate cytidylyltransferase (225 aa).

Belongs to the IspD/TarI cytidylyltransferase family. IspD subfamily.

The catalysed reaction is 2-C-methyl-D-erythritol 4-phosphate + CTP + H(+) = 4-CDP-2-C-methyl-D-erythritol + diphosphate. It participates in isoprenoid biosynthesis; isopentenyl diphosphate biosynthesis via DXP pathway; isopentenyl diphosphate from 1-deoxy-D-xylulose 5-phosphate: step 2/6. In terms of biological role, catalyzes the formation of 4-diphosphocytidyl-2-C-methyl-D-erythritol from CTP and 2-C-methyl-D-erythritol 4-phosphate (MEP). The chain is 2-C-methyl-D-erythritol 4-phosphate cytidylyltransferase from Haemophilus influenzae (strain 86-028NP).